Consider the following 725-residue polypeptide: Glutamine-dependent NAD(+) synthetase (725 aa).

The CN hydrolase domain maps to 5–275 (VTVATCALNQ…VEVLTATLDL (271 aa)). E45 acts as the Proton acceptor; for glutaminase activity in catalysis. Catalysis depends on K114, which acts as the For glutaminase activity. The active-site Nucleophile; for glutaminase activity is C175. The segment at 325–706 (YHRPEEEISL…KTSQTLEEQI (382 aa)) is ligase. 355–362 (PLSGGVDS) is an ATP binding site. S357 is a catalytic residue.

The protein in the C-terminal section; belongs to the NAD synthetase family. In terms of assembly, homohexamer.

The catalysed reaction is deamido-NAD(+) + L-glutamine + ATP + H2O = L-glutamate + AMP + diphosphate + NAD(+) + H(+). Its pathway is cofactor biosynthesis; NAD(+) biosynthesis; NAD(+) from deamido-NAD(+) (L-Gln route): step 1/1. In terms of biological role, catalyzes the final step of the nicotinamide adenine dinucleotide (NAD) de novo synthesis pathway, the ATP-dependent amidation of deamido-NAD using L-glutamine as a nitrogen source. The chain is Glutamine-dependent NAD(+) synthetase (Nadsyn1) from Rattus norvegicus (Rat).